A 275-amino-acid polypeptide reads, in one-letter code: 2,3,4,5-tetrahydropyridine-2,6-dicarboxylate N-succinyltransferase (275 aa).

Positions 108 and 145 each coordinate substrate.

The protein belongs to the transferase hexapeptide repeat family. In terms of assembly, homotrimer.

It is found in the cytoplasm. The enzyme catalyses (S)-2,3,4,5-tetrahydrodipicolinate + succinyl-CoA + H2O = (S)-2-succinylamino-6-oxoheptanedioate + CoA. It participates in amino-acid biosynthesis; L-lysine biosynthesis via DAP pathway; LL-2,6-diaminopimelate from (S)-tetrahydrodipicolinate (succinylase route): step 1/3. The polypeptide is 2,3,4,5-tetrahydropyridine-2,6-dicarboxylate N-succinyltransferase (Jannaschia sp. (strain CCS1)).